We begin with the raw amino-acid sequence, 251 residues long: uncharacterized protein (251 aa).

The protein to M.jannaschii MJ0638 and MJ1123 and M.tuberculosis Rv2003c.

This is an uncharacterized protein from Methanocaldococcus jannaschii (strain ATCC 43067 / DSM 2661 / JAL-1 / JCM 10045 / NBRC 100440) (Methanococcus jannaschii).